We begin with the raw amino-acid sequence, 150 residues long: Ribonuclease pancreatic delta-type (150 aa).

The signal sequence occupies residues 1-25; the sequence is MGLEKSFILFSLLVLVLGWVQPSLG. Arginine 35 is a binding site for substrate. Histidine 37 serves as the catalytic Proton acceptor. Intrachain disulfides connect cysteine 51–cysteine 110, cysteine 65–cysteine 121, and cysteine 83–cysteine 136. Residues 66–70, lysine 91, and arginine 111 contribute to the substrate site; that span reads KRVNT. Histidine 145 acts as the Proton donor in catalysis.

It belongs to the pancreatic ribonuclease family. In terms of assembly, monomer.

The protein resides in the secreted. The catalysed reaction is an [RNA] containing cytidine + H2O = an [RNA]-3'-cytidine-3'-phosphate + a 5'-hydroxy-ribonucleotide-3'-[RNA].. It catalyses the reaction an [RNA] containing uridine + H2O = an [RNA]-3'-uridine-3'-phosphate + a 5'-hydroxy-ribonucleotide-3'-[RNA].. Functionally, endonuclease that catalyzes the cleavage of RNA on the 3' side of pyrimidine nucleotides. Acts on single-stranded and double-stranded RNA. In Rattus rattus (Black rat), this protein is Ribonuclease pancreatic delta-type.